Reading from the N-terminus, the 402-residue chain is UPF0261 protein BP1203 (402 aa).

It belongs to the UPF0261 family.

The polypeptide is UPF0261 protein BP1203 (Bordetella pertussis (strain Tohama I / ATCC BAA-589 / NCTC 13251)).